Reading from the N-terminus, the 260-residue chain is 3-alpha-(or 20-beta)-hydroxysteroid dehydrogenase (260 aa).

Residues R17, M19, D38, D61, V62, N88, Y153, K157, V186, T188, and T191 each coordinate NAD(+). Y153 (proton acceptor) is an active-site residue.

Belongs to the short-chain dehydrogenases/reductases (SDR) family. In terms of assembly, homotetramer.

It carries out the reaction androstan-3alpha,17beta-diol + NAD(+) = 17beta-hydroxyandrostanone + NADH + H(+). It functions in the pathway lipid metabolism; steroid degradation. Functionally, probably involved in steroid metabolism. The chain is 3-alpha-(or 20-beta)-hydroxysteroid dehydrogenase (fabG3) from Mycobacterium bovis (strain ATCC BAA-935 / AF2122/97).